A 500-amino-acid polypeptide reads, in one-letter code: Putative DNA recombinase (500 aa).

The Resolvase/invertase-type recombinase catalytic domain occupies 1-144 (MIAIYVRVST…SGRLQKMKKG (144 aa)). The active-site O-(5'-phospho-DNA)-serine intermediate is serine 9. The segment at residues 152–288 (LYGYKFVKEK…QELLGQSKRK (137 aa)) is a DNA-binding region (recombinase). Residues 372–448 (KEAEQSNHLS…IQSKMKVLDD (77 aa)) adopt a coiled-coil conformation.

This sequence in the N-terminal section; belongs to the site-specific recombinase resolvase family.

Functionally, putative site-specific recombinase having a very important role in sporulation. It probably plays a role in the recombination of SpoIIIC and SpoIVCB to form sigma K factor. The polypeptide is Putative DNA recombinase (cisA) (Bacillus subtilis (strain 168)).